The sequence spans 412 residues: Multifunctional CCA protein (412 aa).

Positions 8 and 11 each coordinate ATP. CTP contacts are provided by Gly8 and Arg11. Mg(2+)-binding residues include Asp21 and Asp23. Arg91, Arg137, and Arg140 together coordinate ATP. Residues Arg91, Arg137, and Arg140 each coordinate CTP. Positions 228-329 constitute an HD domain; that stretch reads TGIHTLMTLS…VKLFDSIDAW (102 aa).

Belongs to the tRNA nucleotidyltransferase/poly(A) polymerase family. Bacterial CCA-adding enzyme type 1 subfamily. Monomer. Can also form homodimers and oligomers. Mg(2+) serves as cofactor. The cofactor is Ni(2+).

The catalysed reaction is a tRNA precursor + 2 CTP + ATP = a tRNA with a 3' CCA end + 3 diphosphate. It carries out the reaction a tRNA with a 3' CCA end + 2 CTP + ATP = a tRNA with a 3' CCACCA end + 3 diphosphate. In terms of biological role, catalyzes the addition and repair of the essential 3'-terminal CCA sequence in tRNAs without using a nucleic acid template. Adds these three nucleotides in the order of C, C, and A to the tRNA nucleotide-73, using CTP and ATP as substrates and producing inorganic pyrophosphate. tRNA 3'-terminal CCA addition is required both for tRNA processing and repair. Also involved in tRNA surveillance by mediating tandem CCA addition to generate a CCACCA at the 3' terminus of unstable tRNAs. While stable tRNAs receive only 3'-terminal CCA, unstable tRNAs are marked with CCACCA and rapidly degraded. The protein is Multifunctional CCA protein of Escherichia coli O8 (strain IAI1).